A 315-amino-acid polypeptide reads, in one-letter code: Acetyl-coenzyme A carboxylase carboxyl transferase subunit alpha (315 aa).

The 255-residue stretch at 35–289 folds into the CoA carboxyltransferase C-terminal domain; that stretch reads KLSKKRFELM…RKAVAAELKI (255 aa).

Belongs to the AccA family. As to quaternary structure, acetyl-CoA carboxylase is a heterohexamer composed of biotin carboxyl carrier protein (AccB), biotin carboxylase (AccC) and two subunits each of ACCase subunit alpha (AccA) and ACCase subunit beta (AccD).

Its subcellular location is the cytoplasm. It carries out the reaction N(6)-carboxybiotinyl-L-lysyl-[protein] + acetyl-CoA = N(6)-biotinyl-L-lysyl-[protein] + malonyl-CoA. It functions in the pathway lipid metabolism; malonyl-CoA biosynthesis; malonyl-CoA from acetyl-CoA: step 1/1. Its function is as follows. Component of the acetyl coenzyme A carboxylase (ACC) complex. First, biotin carboxylase catalyzes the carboxylation of biotin on its carrier protein (BCCP) and then the CO(2) group is transferred by the carboxyltransferase to acetyl-CoA to form malonyl-CoA. This chain is Acetyl-coenzyme A carboxylase carboxyl transferase subunit alpha, found in Francisella tularensis subsp. mediasiatica (strain FSC147).